Consider the following 818-residue polypeptide: Protein TOC75-3, chloroplastic (818 aa).

The transit peptide at methionine 1–valine 79 directs the protein to the chloroplast. A compositionally biased stretch (low complexity) spans threonine 15–serine 41. The tract at residues threonine 15–aspartate 67 is disordered. Residues proline 57–aspartate 67 are compositionally biased toward basic and acidic residues. The N-terminal 61 residues, alanine 80–alanine 140, are a transit peptide targeting the chloroplast; outer membrane. 3 consecutive POTRA domains span residues aspartate 141 to serine 246, threonine 247 to glycine 364, and aspartate 365 to leucine 448. Over aspartate 141 to serine 473 the chain is Chloroplast intermembrane. The beta stranded transmembrane segment at phenylalanine 474–phenylalanine 482 threads the bilayer. Residues glutamate 483–aspartate 509 lie on the Cytoplasmic side of the membrane. Residues leucine 510–histidine 518 form a beta stranded membrane-spanning segment. At proline 519 to arginine 562 the chain is on the chloroplast intermembrane side. A beta stranded transmembrane segment spans residues alanine 563–threonine 570. Topologically, residues glutamate 571–lysine 578 are cytoplasmic. A beta stranded membrane pass occupies residues phenylalanine 579 to glutamate 586. The Chloroplast intermembrane portion of the chain corresponds to glutamate 587–proline 693. A beta stranded transmembrane segment spans residues proline 694 to tyrosine 702. At glycine 703–alanine 714 the chain is on the cytoplasmic side. A beta stranded transmembrane segment spans residues phenylalanine 715–valine 723. The Chloroplast intermembrane segment spans residues arginine 724–serine 785. Residues tyrosine 786 to leucine 792 traverse the membrane as a beta stranded segment. Residues glycine 793–glycine 806 lie on the Cytoplasmic side of the membrane. A beta stranded transmembrane segment spans residues threonine 807–phenylalanine 814. Over glycine 815–tyrosine 818 the chain is Chloroplast intermembrane.

Belongs to the TOC75 family. In terms of assembly, part of the TOC core complex that includes a protein for the specific recognition of transit peptides surrounded by a ring composed of four proteins forming translocation channels, and four to five GTP-binding proteins providing energy. This core complex can interact with components of the TIC complex to form a larger import complex. Chloroplastic protein precursors such as prSS (precursor of the RuBisCO small subunit) also interact with these complexes. The TOC complex contains a specific subset of polar lipids such as digalactosyldiacylglyceride (DGDG), phosphatidylcholine (PC) and phosphatidylglycerol (PG). TOC75-3 interacts with TOC34/OEP34, TOC159/TOC86, TOC132 and TOC120. Interacts with SP1. Interacts with TIC236. Mostly expressed in young and actively dividing photosynthetic tissues and, to a lower extent, in old leaves and roots. Particularly low levels in leaves after etiolation.

The protein resides in the plastid. It localises to the chloroplast outer membrane. Functionally, essential protein. Mediates the insertion of proteins targeted to the outer membrane of chloroplasts. Required for the import of protein precursors into chloroplasts. Forms the voltage-dependent preprotein translocation channels (hydrophilic beta barrel) of the TOC complex in the chloroplastic outer membrane. This chain is Protein TOC75-3, chloroplastic, found in Arabidopsis thaliana (Mouse-ear cress).